The primary structure comprises 141 residues: MAHVLIVEARFYSHLNDMLLDGVRSALDAEGHSHETVTVPGALEVPAAIALAADSGRFDAYVALGVVIRGETYHFEVVSNESARGIMALTLDGLAIGNGILTVENEEQALARADKTRKDKGGEAAKAALAMLALKEQFGIG.

Residues Phe11, Ala42–Glu44, and Val66–Ile68 each bind 5-amino-6-(D-ribitylamino)uracil. Residue Glu71–Thr72 participates in (2S)-2-hydroxy-3-oxobutyl phosphate binding. His74 functions as the Proton donor in the catalytic mechanism. Residue Asn98 coordinates 5-amino-6-(D-ribitylamino)uracil. Arg112 contacts (2S)-2-hydroxy-3-oxobutyl phosphate.

The protein belongs to the DMRL synthase family.

The catalysed reaction is (2S)-2-hydroxy-3-oxobutyl phosphate + 5-amino-6-(D-ribitylamino)uracil = 6,7-dimethyl-8-(1-D-ribityl)lumazine + phosphate + 2 H2O + H(+). The protein operates within cofactor biosynthesis; riboflavin biosynthesis; riboflavin from 2-hydroxy-3-oxobutyl phosphate and 5-amino-6-(D-ribitylamino)uracil: step 1/2. Catalyzes the formation of 6,7-dimethyl-8-ribityllumazine by condensation of 5-amino-6-(D-ribitylamino)uracil with 3,4-dihydroxy-2-butanone 4-phosphate. This is the penultimate step in the biosynthesis of riboflavin. This is 6,7-dimethyl-8-ribityllumazine synthase from Sphingopyxis alaskensis (strain DSM 13593 / LMG 18877 / RB2256) (Sphingomonas alaskensis).